Here is a 386-residue protein sequence, read N- to C-terminus: Probable serine/threonine-protein kinase PBL23 (386 aa).

Cysteine 5 is lipidated: S-palmitoyl cysteine. Positions 82 to 360 (FNPDNQLGEG…SDVVTALEYL (279 aa)) constitute a Protein kinase domain. ATP contacts are provided by residues 88-96 (LGEGGFGRV) and lysine 111. Aspartate 210 acts as the Proton acceptor in catalysis. A disordered region spans residues 365 to 386 (TEEDGQTVEGEEEEEEDERSKL). Residues 368 to 386 (DGQTVEGEEEEEEDERSKL) show a composition bias toward acidic residues.

Belongs to the protein kinase superfamily. Ser/Thr protein kinase family.

Its subcellular location is the cell membrane. The enzyme catalyses L-seryl-[protein] + ATP = O-phospho-L-seryl-[protein] + ADP + H(+). It catalyses the reaction L-threonyl-[protein] + ATP = O-phospho-L-threonyl-[protein] + ADP + H(+). Functionally, may be involved in plant defense signaling. In Arabidopsis thaliana (Mouse-ear cress), this protein is Probable serine/threonine-protein kinase PBL23.